The following is a 313-amino-acid chain: DNA-directed RNA polymerase subunit alpha (313 aa).

Residues 1–226 are alpha N-terminal domain (alpha-NTD); it reads MLEIEKPKIE…EHMRLFLGLT (226 aa). The alpha C-terminal domain (alpha-CTD) stretch occupies residues 242–313; it reads TRDRLMDMSI…LGLSLRSSEE (72 aa).

Belongs to the RNA polymerase alpha chain family. As to quaternary structure, homodimer. The RNAP catalytic core consists of 2 alpha, 1 beta, 1 beta' and 1 omega subunit. When a sigma factor is associated with the core the holoenzyme is formed, which can initiate transcription.

It carries out the reaction RNA(n) + a ribonucleoside 5'-triphosphate = RNA(n+1) + diphosphate. Its function is as follows. DNA-dependent RNA polymerase catalyzes the transcription of DNA into RNA using the four ribonucleoside triphosphates as substrates. The chain is DNA-directed RNA polymerase subunit alpha from Moorella thermoacetica (strain ATCC 39073 / JCM 9320).